A 66-amino-acid polypeptide reads, in one-letter code: Large ribosomal subunit protein bL35 (66 aa).

This sequence belongs to the bacterial ribosomal protein bL35 family.

The sequence is that of Large ribosomal subunit protein bL35 from Borreliella afzelii (strain PKo) (Borrelia afzelii).